Reading from the N-terminus, the 468-residue chain is UDP-N-acetylmuramate--L-alanine ligase (468 aa).

122–128 (GSHGKTT) is an ATP binding site.

It belongs to the MurCDEF family.

The protein localises to the cytoplasm. It carries out the reaction UDP-N-acetyl-alpha-D-muramate + L-alanine + ATP = UDP-N-acetyl-alpha-D-muramoyl-L-alanine + ADP + phosphate + H(+). The protein operates within cell wall biogenesis; peptidoglycan biosynthesis. Its function is as follows. Cell wall formation. This is UDP-N-acetylmuramate--L-alanine ligase from Synechococcus sp. (strain CC9902).